Consider the following 831-residue polypeptide: V-type proton ATPase subunit a (831 aa).

Over Met-1–Glu-418 the chain is Cytoplasmic. Residues Val-419–Phe-437 traverse the membrane as a helical segment. At Gly-438–Asp-439 the chain is on the vacuolar side. The helical transmembrane segment at Leu-440–Tyr-456 threads the bilayer. At Glu-457 to Gly-471 the chain is on the cytoplasmic side. A helical transmembrane segment spans residues Met-472 to Pro-501. Over Met-502–Ser-548 the chain is Vacuolar. The chain crosses the membrane as a helical span at residues Tyr-549 to Leu-568. At Ser-569 to Phe-586 the chain is on the cytoplasmic side. Residues Val-587–Lys-607 traverse the membrane as a helical segment. Topologically, residues Trp-608–Gly-650 are vacuolar. A helical membrane pass occupies residues Leu-651–Leu-670. Topologically, residues Trp-671–Thr-723 are cytoplasmic. Residues Ile-724 to Asn-748 form a helical membrane-spanning segment. Over Gln-749 to Val-769 the chain is Vacuolar. Residues Gly-770–Glu-808 traverse the membrane as a helical segment. Residues Gly-809–Glu-831 lie on the Cytoplasmic side of the membrane.

The protein belongs to the V-ATPase 116 kDa subunit family. In terms of assembly, V-ATPase is a heteromultimeric enzyme composed of a peripheral catalytic V1 complex (components A to H) attached to an integral membrane V0 proton pore complex (components: a, c, c', c'', d, e, f and VOA1).

The protein localises to the vacuole membrane. Functionally, subunit of the V0 complex of vacuolar(H+)-ATPase (V-ATPase), a multisubunit enzyme composed of a peripheral complex (V1) that hydrolyzes ATP and a membrane integral complex (V0) that translocates protons. V-ATPase is responsible for acidifying and maintaining the pH of intracellular compartments. The sequence is that of V-type proton ATPase subunit a (vph1) from Schizosaccharomyces pombe (strain 972 / ATCC 24843) (Fission yeast).